The primary structure comprises 1060 residues: Outer capsid protein VP2 (1060 aa).

The protein belongs to the orbivirus VP2 family.

It is found in the virion. Functionally, the VP2 protein is one of the two proteins (with VP5) which constitute the virus particle outer capsid. It is the major target of the host immunogenic response. The protein is Outer capsid protein VP2 (Segment-2) of Camelus dromedarius (Dromedary).